Reading from the N-terminus, the 65-residue chain is Conotoxin VnMLCL-041 (65 aa).

An N-terminal signal peptide occupies residues 1-19 (MLCLPVFIILLLLASPAAP). Residues 20–43 (NPLQTRIQSNLIRAGPEDANIKTD) constitute a propeptide that is removed on maturation. At Lys-64 the chain carries Lysine amide.

It belongs to the conotoxin T superfamily. In terms of tissue distribution, expressed by the venom duct.

It is found in the secreted. This is Conotoxin VnMLCL-041 from Conus ventricosus (Mediterranean cone).